Reading from the N-terminus, the 332-residue chain is Thiosulfate-binding protein (332 aa).

Residues 1-22 form the signal peptide; that stretch reads MKRLFSASLLAAGLALGGAAHA.

Belongs to the prokaryotic sulfate-binding protein family.

The protein resides in the periplasm. Binds thiosulfate specifically and with high affinity. Has no detectable affinity for sulfate. The polypeptide is Thiosulfate-binding protein (Pseudomonas aeruginosa (strain ATCC 15692 / DSM 22644 / CIP 104116 / JCM 14847 / LMG 12228 / 1C / PRS 101 / PAO1)).